Here is a 222-residue protein sequence, read N- to C-terminus: Ribonuclease HII (222 aa).

Positions 32-222 (FHIAGVDEVG…LIKRYKEDIS (191 aa)) constitute an RNase H type-2 domain. A divalent metal cation contacts are provided by Asp-38, Glu-39, and Asp-130.

Belongs to the RNase HII family. The cofactor is Mn(2+). Mg(2+) serves as cofactor.

Its subcellular location is the cytoplasm. The catalysed reaction is Endonucleolytic cleavage to 5'-phosphomonoester.. Its function is as follows. Endonuclease that specifically degrades the RNA of RNA-DNA hybrids. In Bartonella bacilliformis (strain ATCC 35685 / KC583 / Herrer 020/F12,63), this protein is Ribonuclease HII.